The primary structure comprises 484 residues: Glycogen synthase 2 (484 aa).

Position 15 (Lys15) interacts with ADP-alpha-D-glucose.

It belongs to the glycosyltransferase 1 family. Bacterial/plant glycogen synthase subfamily.

The enzyme catalyses [(1-&gt;4)-alpha-D-glucosyl](n) + ADP-alpha-D-glucose = [(1-&gt;4)-alpha-D-glucosyl](n+1) + ADP + H(+). Its pathway is glycan biosynthesis; glycogen biosynthesis. Functionally, synthesizes alpha-1,4-glucan chains using ADP-glucose. The chain is Glycogen synthase 2 from Geobacter metallireducens (strain ATCC 53774 / DSM 7210 / GS-15).